The sequence spans 280 residues: Golgi phosphoprotein 3-like (280 aa).

The tract at residues 1 to 30 (MTTLTRRGRRADVGQENRVDSEDYIKDKDE) is disordered. Residues 10–30 (RADVGQENRVDSEDYIKDKDE) show a composition bias toward basic and acidic residues. A 1,2-diacyl-sn-glycero-3-phospho-(1D-myo-inositol 4-phosphate)-binding residues include Trp-62, Arg-71, Arg-152, and Arg-155. Positions 171-182 (EKQNFLLFDMTT) are beta-hairpin required for oligomerization.

The protein belongs to the GOLPH3/VPS74 family. Homooligomer.

It is found in the golgi apparatus. It localises to the golgi stack membrane. The protein resides in the trans-Golgi network membrane. Phosphatidylinositol-4-phosphate-binding protein that may play a role in the process of vesicle budding at the Golgi and anterograde transport to the plasma membrane. The polypeptide is Golgi phosphoprotein 3-like (golph3l) (Xenopus tropicalis (Western clawed frog)).